Consider the following 350-residue polypeptide: DNA-directed RNA polymerase subunit alpha (350 aa).

The interval methionine 1–asparagine 226 is alpha N-terminal domain (alpha-NTD). The segment at alanine 241 to leucine 350 is alpha C-terminal domain (alpha-CTD). The tract at residues glycine 328–leucine 350 is disordered. Residues tyrosine 336–leucine 350 show a composition bias toward acidic residues.

It belongs to the RNA polymerase alpha chain family. As to quaternary structure, homodimer. The RNAP catalytic core consists of 2 alpha, 1 beta, 1 beta' and 1 omega subunit. When a sigma factor is associated with the core the holoenzyme is formed, which can initiate transcription.

The catalysed reaction is RNA(n) + a ribonucleoside 5'-triphosphate = RNA(n+1) + diphosphate. Functionally, DNA-dependent RNA polymerase catalyzes the transcription of DNA into RNA using the four ribonucleoside triphosphates as substrates. This is DNA-directed RNA polymerase subunit alpha from Mycolicibacterium smegmatis (strain ATCC 700084 / mc(2)155) (Mycobacterium smegmatis).